Here is a 72-residue protein sequence, read N- to C-terminus: Translation initiation factor IF-1 (72 aa).

Residues 1–72 (MAKEELLEFP…TKGRITYRFK (72 aa)) enclose the S1-like domain.

It belongs to the IF-1 family. Component of the 30S ribosomal translation pre-initiation complex which assembles on the 30S ribosome in the order IF-2 and IF-3, IF-1 and N-formylmethionyl-tRNA(fMet); mRNA recruitment can occur at any time during PIC assembly.

Its subcellular location is the cytoplasm. Functionally, one of the essential components for the initiation of protein synthesis. Stabilizes the binding of IF-2 and IF-3 on the 30S subunit to which N-formylmethionyl-tRNA(fMet) subsequently binds. Helps modulate mRNA selection, yielding the 30S pre-initiation complex (PIC). Upon addition of the 50S ribosomal subunit IF-1, IF-2 and IF-3 are released leaving the mature 70S translation initiation complex. This is Translation initiation factor IF-1 from Maricaulis maris (strain MCS10) (Caulobacter maris).